Consider the following 131-residue polypeptide: Calvin cycle protein CP12-2, chloroplastic (131 aa).

A chloroplast-targeting transit peptide spans 1–53 (MATIATGLNIATQRVFVTSENRPVCLAGPVHLNNSWNLGSRTTNRMMKLQPIK). Cystine bridges form between cysteine 75/cysteine 84 and cysteine 117/cysteine 126. Residues 97 to 131 (AASHARDKKKADGSDPLEEYCKDNPETNECRTYDN) form a disordered region. Residues 105-131 (KKADGSDPLEEYCKDNPETNECRTYDN) are compositionally biased toward basic and acidic residues.

It belongs to the CP12 family. In terms of assembly, monomer. Component of a complex that contains two dimers of PRK, two tetramers of GAPDH and CP12. CP12 associates with GAPDH, causing its conformation to change. This GAPDH/CP12 complex binds PRK to form a half-complex (one unit). This unit probably dimerizes due partially to interactions between the enzymes of each unit. In terms of processing, contains two disulfide bonds; only the oxidized protein, with two disulfide bonds, is active in complex formation. The C-terminal disulfide is involved in the interaction with GAPDH and the N-terminal disulfide mediates the binding of PRK with this binary complex. As to expression, mostly expressed in cotyledons, leaves and flower stalks, and, to a lower extent, in flowers and stems. Barely detectable in roots and siliques.

It is found in the plastid. Its subcellular location is the chloroplast. Acts as a linker essential in the assembly of a core complex of PRK/GAPDH. Coordinates the reversible inactivation of chloroplast enzymes GAPDH and PRK during darkness in photosynthetic tissues. The polypeptide is Calvin cycle protein CP12-2, chloroplastic (CP12-2) (Arabidopsis thaliana (Mouse-ear cress)).